The sequence spans 444 residues: Type VI secretion system baseplate component TssK1 (444 aa).

In terms of assembly, forms transient higher-order structures that correlated with dynamics of sheath component TssB1. Interacts with TssA1.

Its function is as follows. Core component of the H1 type VI (H1-T6SS) secretion system that plays a role in the release of toxins targeting both eukaryotic and prokaryotic species. Functions as a spatio-temporal marker for assembly of contractile apparatus made of TssB1 and TssC1. This role in assembly depends on TssM1. In Pseudomonas aeruginosa (strain ATCC 15692 / DSM 22644 / CIP 104116 / JCM 14847 / LMG 12228 / 1C / PRS 101 / PAO1), this protein is Type VI secretion system baseplate component TssK1.